Consider the following 1094-residue polypeptide: MPHDGNERSHRIARLAAVVSGIAGLLLCGIVPLLPVNQTTATIFWPQGSTADGNITQITAPLVSGAPRALDISIPCSAIATLPANGGLVLSTLPAGGVDTGKAGLFVRANQDTVVVAFRDSVAAVAARSTIAAGGCSALHIWADTGGAGADFMGIPGGAGTLPPEKKPQVGGIFTDLKVGAQPGLSARVDIDTRFITTPGALKKAVMLLGVLAVLVAMVGLAALDRLSRGRTLRDWLTRYRPRVRVGFASRLADAAVIATLLLWHVIGATSSDDGYLLTVARVAPKAGYVANYYRYFGTTEAPFDWYTSVLAQLAAVSTAGVWMRLPATLAGIACWLIVSRFVLRRLGPGPGGLASNRVAVFTAGAVFLSAWLPFNNGLRPEPLIALGVLVTWVLVERSIALGRLAPAAVAIIVATLTATLAPQGLIALAPLLTGARAIAQRIRRRRATDGLLAPLAVLAAALSLITVVVFRDQTLATVAESARIKYKVGPTIAWYQDFLRYYFLTVESNVEGSMSRRFAVLVLLFCLFGVLFVLLRRGRVAGLASGPAWRLIGTTAVGLLLLTFTPTKWAVQFGAFAGLAGVLGAVTAFTFARIGLHSRRNLTLYVTALLFVLAWATSGINGWFYVGNYGVPWYDIQPVIASHPVTSMFLTLSILTGLLAAWYHFRMDYAGHTEVKDNRRNRILASTPLLVVAVIMVAGEVGSMAKAAVFRYPLYTTAKANLTALSTGLSSCAMADDVLAEPDPNAGMLQPVPGQAFGPDGPLGGISPVGFKPEGVGEDLKSDPVVSKPGLVNSDASPNKPNAAITDSAGTAGGKGPVGINGSHAALPFGLDPARTPVMGSYGENNLAATATSAWYQLPPRSPDRPLVVVSAAGAIWSYKEDGDFIYGQSLKLQWGVTGPDGRIQPLGQVFPIDIGPQPAWRNLRFPLAWAPPEADVARIVAYDPNLSPEQWFAFTPPRVPVLESLQRLIGSATPVLMDIATAANFPCQRPFSEHLGIAELPQYRILPDHKQTAASSNLWQSSSTGGPFLFTQALLRTSTIATYLRGDWYRDWGSVEQYHRLVPADQAPDAVVEEGVITVPGWGRPGPIRALP.

A run of 13 helical transmembrane segments spans residues 12-34 (IARL…VPLL), 205-224 (AVML…LAAL), 247-269 (GFAS…VIGA), 322-344 (VWMR…RFVL), 356-375 (SNRV…WLPF), 408-430 (AAVA…IALA), 451-470 (GLLA…TVVV), 519-536 (FAVL…FVLL), 543-565 (GLAS…LLTF), 575-597 (GAFA…RIGL), 604-626 (TLYV…GWFY), 641-663 (IASH…LAAW), and 684-706 (ILAS…GSMA).

Belongs to the emb family.

Its subcellular location is the cell membrane. Arabinosyl transferase responsible for the polymerization of arabinose into the arabinan of arabinogalactan. This chain is Probable arabinosyltransferase A (embA), found in Mycobacterium tuberculosis (strain CDC 1551 / Oshkosh).